Consider the following 1375-residue polypeptide: BNI1-related protein 1 (1375 aa).

Residues 94–490 (CMPQDASLVE…YLIDSFQVST (397 aa)) form the GBD/FH3 domain. A coiled-coil region spans residues 520–601 (QSDEIARRAV…ITTHQRLYDQ (82 aa)). A Phosphoserine modification is found at Ser621. The 193-residue stretch at 659–851 (SSYLTDANNE…LVTPPAPPLP (193 aa)) folds into the FH1 domain. The tract at residues 661 to 684 (YLTDANNENESQNESEDKSKDSLF) is disordered. Ser751 is subject to Phosphoserine. Disordered regions lie at residues 764-785 (KLPQ…QSLL), 817-839 (AVPP…GPSN), and 1285-1309 (KSLL…GEKV). Composition is skewed to pro residues over residues 767–781 (QLPP…PPLP) and 818–828 (VPPPPPPPPLP). One can recognise an FH2 domain in the interval 868–1290 (DLKPPPTEKR…YEQRKSLLDM (423 aa)). The region spanning 1302-1336 (DENDGEKVNRDAVDLLISKLREVKKDPEPLRRRKS) is the DAD domain.

This sequence belongs to the formin homology family. BNI1 subfamily. As to quaternary structure, interacts with profilin at the FH1 domain.

In terms of biological role, may organize microtubules by mediating spindle positioning and movement in the budding process. Potential target of the RHO family members. This Saccharomyces cerevisiae (strain ATCC 204508 / S288c) (Baker's yeast) protein is BNI1-related protein 1 (BNR1).